A 1568-amino-acid polypeptide reads, in one-letter code: Pentafunctional AROM polypeptide (1568 aa).

The segment at 1–380 (MSQVEKVSIL…YQLKAHEVSK (380 aa)) is 3-dehydroquinate synthase. Residues 43-45 (DSN), 81-84 (ENNK), 112-114 (GGV), and Asp117 each bind NAD(+). A 7-phospho-2-dehydro-3-deoxy-D-arabino-heptonate-binding site is contributed by Arg128. An NAD(+)-binding site is contributed by 137 to 138 (TT). Residues Asp144 and Lys150 each contribute to the 7-phospho-2-dehydro-3-deoxy-D-arabino-heptonate site. NAD(+) is bound at residue Lys159. Residue Asn160 coordinates 7-phospho-2-dehydro-3-deoxy-D-arabino-heptonate. NAD(+) is bound by residues 177–180 (FLTT) and Asn188. Glu192 serves as a coordination point for Zn(2+). Residues 192–195 (EVVK) and Lys244 each bind 7-phospho-2-dehydro-3-deoxy-D-arabino-heptonate. The active-site Proton acceptor; for 3-dehydroquinate synthase activity is the Glu254. Residues 258 to 262 (RNLLN) and His265 contribute to the 7-phospho-2-dehydro-3-deoxy-D-arabino-heptonate site. Position 265 (His265) interacts with Zn(2+). The active-site Proton acceptor; for 3-dehydroquinate synthase activity is His269. 2 residues coordinate 7-phospho-2-dehydro-3-deoxy-D-arabino-heptonate: His281 and Lys352. His281 provides a ligand contact to Zn(2+). The tract at residues 393-842 (VHPFQEETTP…WDVLHTKFGV (450 aa)) is EPSP synthase. Residue Cys824 is the For EPSP synthase activity of the active site. The segment at 867–1056 (DKSIVVIGMR…VPKGRSFVLS (190 aa)) is shikimate kinase. 874-881 (GMRAAGKS) provides a ligand contact to ATP. The interval 1057–1267 (LACSDLNDIA…SGNGQLTVGE (211 aa)) is 3-dehydroquinase. The tract at residues 1280 to 1568 (RRNFYIVGNP…VYEAVVDDNV (289 aa)) is shikimate dehydrogenase.

It in the N-terminal section; belongs to the sugar phosphate cyclases superfamily. Dehydroquinate synthase family. In the 2nd section; belongs to the EPSP synthase family. This sequence in the 3rd section; belongs to the shikimate kinase family. The protein in the 4th section; belongs to the type-I 3-dehydroquinase family. It in the C-terminal section; belongs to the shikimate dehydrogenase family. In terms of assembly, homodimer. The cofactor is Zn(2+).

It is found in the cytoplasm. It carries out the reaction 7-phospho-2-dehydro-3-deoxy-D-arabino-heptonate = 3-dehydroquinate + phosphate. It catalyses the reaction 3-dehydroquinate = 3-dehydroshikimate + H2O. The catalysed reaction is shikimate + NADP(+) = 3-dehydroshikimate + NADPH + H(+). The enzyme catalyses shikimate + ATP = 3-phosphoshikimate + ADP + H(+). It carries out the reaction 3-phosphoshikimate + phosphoenolpyruvate = 5-O-(1-carboxyvinyl)-3-phosphoshikimate + phosphate. It functions in the pathway metabolic intermediate biosynthesis; chorismate biosynthesis; chorismate from D-erythrose 4-phosphate and phosphoenolpyruvate: step 2/7. It participates in metabolic intermediate biosynthesis; chorismate biosynthesis; chorismate from D-erythrose 4-phosphate and phosphoenolpyruvate: step 3/7. The protein operates within metabolic intermediate biosynthesis; chorismate biosynthesis; chorismate from D-erythrose 4-phosphate and phosphoenolpyruvate: step 4/7. Its pathway is metabolic intermediate biosynthesis; chorismate biosynthesis; chorismate from D-erythrose 4-phosphate and phosphoenolpyruvate: step 5/7. It functions in the pathway metabolic intermediate biosynthesis; chorismate biosynthesis; chorismate from D-erythrose 4-phosphate and phosphoenolpyruvate: step 6/7. Its function is as follows. The AROM polypeptide catalyzes 5 consecutive enzymatic reactions in prechorismate polyaromatic amino acid biosynthesis. This Clavispora lusitaniae (strain ATCC 42720) (Yeast) protein is Pentafunctional AROM polypeptide.